The sequence spans 101 residues: Large ribosomal subunit protein uL24 (101 aa).

It belongs to the universal ribosomal protein uL24 family. As to quaternary structure, part of the 50S ribosomal subunit.

In terms of biological role, one of two assembly initiator proteins, it binds directly to the 5'-end of the 23S rRNA, where it nucleates assembly of the 50S subunit. Functionally, one of the proteins that surrounds the polypeptide exit tunnel on the outside of the subunit. The polypeptide is Large ribosomal subunit protein uL24 (Streptococcus agalactiae serotype III (strain NEM316)).